The primary structure comprises 495 residues: MKRSALLASFLPLALGCDSAETHSCASAFSVSSAAAASFCATFTASTVTATTGVPDVFLSNCDYKTKHLSSACSCLGTADGSAPASTPAAPAVSSSSKVGKAPAVAATRTSAIPTTFHTTAVRVPLSTSAAAAVTSQAVLPAQSSVAGNGGTTCTVTEYASISSAVASCSNILLSNINAPASSTIDLTGLQTGAAVIFAGETTFGDTYDSDFDPIVISGTDVTITGEEGHVINGNGEAYWDGEGSNGGQDKPDHFIVVKDMYNSKIENLNILNWPVHCFEIENTEYLTISGLILNNTAGDAANSKSDGDPAAHNTDGFDIKQSDFLTLSNSWVHNQDDCVAVTSGSSIVVDNLYCYGGHGLSIGSIGGKSNNTVDGVTFSNSQVINSENGCRIKSNADTTGEVYNVKYENITLSGISDYGIDIQQDYENGGATGDPTNGVKIENISFVNVKGTMSDGKDYYILCGDGSCSNFVFTDVDITGGSDDSCNYPSSGCP.

A signal peptide spans 1–16 (MKRSALLASFLPLALG). A disulfide bond links Cys154 and Cys169. PbH1 repeat units lie at residues 261 to 283 (MYNSKIENLNILNWPVHCFEIEN), 284 to 322 (TEYLTISGLILNNTAGDAANSKSDGDPAAHNTDGFDIKQ), and 323 to 344 (SDFLTLSNSWVHNQDDCVAVTS). A glycan (N-linked (GlcNAc...) asparagine) is linked at Asn295. Asp337 acts as the Proton donor in catalysis. Residues Cys339 and Cys355 are joined by a disulfide bond. His359 is an active-site residue. N-linked (GlcNAc...) asparagine glycosylation is present at Asn371. PbH1 repeat units follow at residues 374-395 (VDGVTFSNSQVINSENGCRIKS) and 403-425 (VYNVKYENITLSGISDYGIDIQQ). N-linked (GlcNAc...) asparagine glycans are attached at residues Asn410 and Asn444. Intrachain disulfides connect Cys464–Cys469 and Cys487–Cys494. One copy of the PbH1 6 repeat lies at 469–492 (CSNFVFTDVDITGGSDDSCNYPSS).

Belongs to the glycosyl hydrolase 28 family.

The protein localises to the secreted. It carries out the reaction (1,4-alpha-D-galacturonosyl)n+m + H2O = (1,4-alpha-D-galacturonosyl)n + (1,4-alpha-D-galacturonosyl)m.. Its function is as follows. Involved in maceration and soft-rotting of plant tissue. Hydrolyzes the 1,4-alpha glycosidic bonds of de-esterified pectate in the smooth region of the plant cell wall. The sequence is that of Probable endopolygalacturonase D (pgaD) from Aspergillus niger (strain ATCC MYA-4892 / CBS 513.88 / FGSC A1513).